The following is a 299-amino-acid chain: RGG repeats nuclear RNA binding protein A (299 aa).

Over residues R1–R21 the composition is skewed to gly residues. Disordered stretches follow at residues R1–T173 and E232–K299. Residues R45–G60 show a composition bias toward basic and acidic residues. The span at G61–N78 shows a compositional bias: gly residues. 2 stretches are compositionally biased toward basic and acidic residues: residues E86–S98 and D134–G146. An Arginine-rich RNA-binding motif E-R-P-R-R-X-[F/Y]-[E/D]-R-R-S motif is present at residues E88–S98. The segment covering R267–G278 has biased composition (gly residues).

It belongs to the SERBP1-HABP4 family. In terms of tissue distribution, expressed in seedlings but not in roots.

The protein localises to the nucleus. Its subcellular location is the cytoplasm. It localises to the perinuclear region. Its function is as follows. Ribosome-binding protein that acts as a regulator of mRNA translation by promoting ribosome inactivation. Binds RNA. In Nicotiana tabacum (Common tobacco), this protein is RGG repeats nuclear RNA binding protein A.